The following is a 295-amino-acid chain: 4-hydroxy-tetrahydrodipicolinate synthase (295 aa).

Residue Thr46 participates in pyruvate binding. The active-site Proton donor/acceptor is Tyr134. The active-site Schiff-base intermediate with substrate is Lys162. Position 204 (Val204) interacts with pyruvate.

Belongs to the DapA family. In terms of assembly, homotetramer; dimer of dimers.

The protein localises to the cytoplasm. It catalyses the reaction L-aspartate 4-semialdehyde + pyruvate = (2S,4S)-4-hydroxy-2,3,4,5-tetrahydrodipicolinate + H2O + H(+). Its pathway is amino-acid biosynthesis; L-lysine biosynthesis via DAP pathway; (S)-tetrahydrodipicolinate from L-aspartate: step 3/4. Its function is as follows. Catalyzes the condensation of (S)-aspartate-beta-semialdehyde [(S)-ASA] and pyruvate to 4-hydroxy-tetrahydrodipicolinate (HTPA). In Oceanobacillus iheyensis (strain DSM 14371 / CIP 107618 / JCM 11309 / KCTC 3954 / HTE831), this protein is 4-hydroxy-tetrahydrodipicolinate synthase.